The sequence spans 197 residues: MALNNPNPTIRVLYATDSCVITYSLMLLTGQESSEDAYVISYDWSSELDDLFGSQPRVLDADVGDSWDTTDQSDEELLAAALLERKPSVSFCLLSGIVGGASDEPQERIRPMFVCAFLTLTGARALTKTLLHGHPISSKILLQALVDGDTFQLHNDLILALAITLDNATARTGRTAAAAKYDPQRGSVKAAILGHST.

This sequence belongs to the herpesviridae UL52 family.

In terms of biological role, involved in DNA replication. The polypeptide is DNA helicase/primase complex protein (7) (Equus caballus (Horse)).